Reading from the N-terminus, the 510-residue chain is 2-isopropylmalate synthase (510 aa).

Residues 4-266 (IQVFDTTLRD…ETNLKLDETK (263 aa)) enclose the Pyruvate carboxyltransferase domain. The Mn(2+) site is built by Asp13, His201, His203, and Asn237. The tract at residues 390-510 (QVETLQLQFV…DTARKDGVVS (121 aa)) is regulatory domain.

It belongs to the alpha-IPM synthase/homocitrate synthase family. LeuA type 1 subfamily. As to quaternary structure, homodimer. It depends on Mn(2+) as a cofactor.

Its subcellular location is the cytoplasm. The catalysed reaction is 3-methyl-2-oxobutanoate + acetyl-CoA + H2O = (2S)-2-isopropylmalate + CoA + H(+). Its pathway is amino-acid biosynthesis; L-leucine biosynthesis; L-leucine from 3-methyl-2-oxobutanoate: step 1/4. Catalyzes the condensation of the acetyl group of acetyl-CoA with 3-methyl-2-oxobutanoate (2-ketoisovalerate) to form 3-carboxy-3-hydroxy-4-methylpentanoate (2-isopropylmalate). The sequence is that of 2-isopropylmalate synthase from Staphylococcus carnosus (strain TM300).